The primary structure comprises 138 residues: Superoxide dismutase [Mn] (138 aa).

Mn(2+) contacts are provided by histidine 1, histidine 49, aspartate 133, and histidine 137.

The protein belongs to the iron/manganese superoxide dismutase family. Requires Mn(2+) as cofactor.

The enzyme catalyses 2 superoxide + 2 H(+) = H2O2 + O2. Destroys superoxide anion radicals which are normally produced within the cells and which are toxic to biological systems. This is Superoxide dismutase [Mn] (sodA) from Mycobacterium celatum.